Here is a 61-residue protein sequence, read N- to C-terminus: MDPKLLDILACPLTKGPLVLSEDKSELISKQAGLAYPIRDGIPVMLESEARALNVDERLDK.

The protein belongs to the UPF0434 family.

The polypeptide is UPF0434 protein PSPA7_2181 (Pseudomonas paraeruginosa (strain DSM 24068 / PA7) (Pseudomonas aeruginosa (strain PA7))).